The primary structure comprises 361 residues: Peptide chain release factor 1 (361 aa).

The residue at position 235 (Q235) is an N5-methylglutamine.

It belongs to the prokaryotic/mitochondrial release factor family. Post-translationally, methylated by PrmC. Methylation increases the termination efficiency of RF1.

It localises to the cytoplasm. Peptide chain release factor 1 directs the termination of translation in response to the peptide chain termination codons UAG and UAA. The polypeptide is Peptide chain release factor 1 (Azoarcus sp. (strain BH72)).